A 38-amino-acid polypeptide reads, in one-letter code: Large ribosomal subunit protein bL36 (38 aa).

This sequence belongs to the bacterial ribosomal protein bL36 family.

The protein is Large ribosomal subunit protein bL36 of Chlorobium phaeobacteroides (strain BS1).